Consider the following 485-residue polypeptide: Glutamyl-tRNA(Gln) amidotransferase subunit A (485 aa).

Catalysis depends on charge relay system residues Lys80 and Ser155. The active-site Acyl-ester intermediate is the Ser179.

The protein belongs to the amidase family. GatA subfamily. As to quaternary structure, heterotrimer of A, B and C subunits.

It catalyses the reaction L-glutamyl-tRNA(Gln) + L-glutamine + ATP + H2O = L-glutaminyl-tRNA(Gln) + L-glutamate + ADP + phosphate + H(+). Functionally, allows the formation of correctly charged Gln-tRNA(Gln) through the transamidation of misacylated Glu-tRNA(Gln) in organisms which lack glutaminyl-tRNA synthetase. The reaction takes place in the presence of glutamine and ATP through an activated gamma-phospho-Glu-tRNA(Gln). The chain is Glutamyl-tRNA(Gln) amidotransferase subunit A from Endomicrobium trichonymphae.